The primary structure comprises 193 residues: Segregation and condensation protein B (193 aa).

The protein belongs to the ScpB family. As to quaternary structure, homodimer. Homodimerization may be required to stabilize the binding of ScpA to the Smc head domains. Component of a cohesin-like complex composed of ScpA, ScpB and the Smc homodimer, in which ScpA and ScpB bind to the head domain of Smc. The presence of the three proteins is required for the association of the complex with DNA.

It is found in the cytoplasm. Its function is as follows. Participates in chromosomal partition during cell division. May act via the formation of a condensin-like complex containing Smc and ScpA that pull DNA away from mid-cell into both cell halves. The protein is Segregation and condensation protein B of Clostridium botulinum (strain ATCC 19397 / Type A).